We begin with the raw amino-acid sequence, 340 residues long: Ketol-acid reductoisomerase (NADP(+)) (340 aa).

One can recognise a KARI N-terminal Rossmann domain in the interval 2 to 181 (AKVFYNGDIN…GSARAGVIET (180 aa)). Residues 25–28 (YGSQ), Arg48, Ser52, and 82–85 (DEHQ) contribute to the NADP(+) site. His107 is a catalytic residue. An NADP(+)-binding site is contributed by Gly133. The KARI C-terminal knotted domain occupies 182–327 (TFQEETETDL…RELREMMPFV (146 aa)). Mg(2+)-binding residues include Asp190, Glu194, Glu226, and Glu230. Ser251 is a binding site for substrate.

Belongs to the ketol-acid reductoisomerase family. The cofactor is Mg(2+).

The catalysed reaction is (2R)-2,3-dihydroxy-3-methylbutanoate + NADP(+) = (2S)-2-acetolactate + NADPH + H(+). It carries out the reaction (2R,3R)-2,3-dihydroxy-3-methylpentanoate + NADP(+) = (S)-2-ethyl-2-hydroxy-3-oxobutanoate + NADPH + H(+). It functions in the pathway amino-acid biosynthesis; L-isoleucine biosynthesis; L-isoleucine from 2-oxobutanoate: step 2/4. The protein operates within amino-acid biosynthesis; L-valine biosynthesis; L-valine from pyruvate: step 2/4. Its function is as follows. Involved in the biosynthesis of branched-chain amino acids (BCAA). Catalyzes an alkyl-migration followed by a ketol-acid reduction of (S)-2-acetolactate (S2AL) to yield (R)-2,3-dihydroxy-isovalerate. In the isomerase reaction, S2AL is rearranged via a Mg-dependent methyl migration to produce 3-hydroxy-3-methyl-2-ketobutyrate (HMKB). In the reductase reaction, this 2-ketoacid undergoes a metal-dependent reduction by NADPH to yield (R)-2,3-dihydroxy-isovalerate. The protein is Ketol-acid reductoisomerase (NADP(+)) of Halalkalibacterium halodurans (strain ATCC BAA-125 / DSM 18197 / FERM 7344 / JCM 9153 / C-125) (Bacillus halodurans).